Consider the following 651-residue polypeptide: Acetyl-coenzyme A synthetase (651 aa).

CoA-binding positions include 190–193 (RRGK) and Thr311. ATP is bound by residues 387 to 389 (GEP), 411 to 416 (DTWWQT), Asp508, and Arg523. Ser531 contributes to the CoA binding site. An ATP-binding site is contributed by Arg534. Positions 545, 547, and 550 each coordinate Mg(2+). At Lys617 the chain carries N6-acetyllysine.

It belongs to the ATP-dependent AMP-binding enzyme family. It depends on Mg(2+) as a cofactor. Post-translationally, acetylated. Deacetylation by the SIR2-homolog deacetylase activates the enzyme.

The enzyme catalyses acetate + ATP + CoA = acetyl-CoA + AMP + diphosphate. In terms of biological role, catalyzes the conversion of acetate into acetyl-CoA (AcCoA), an essential intermediate at the junction of anabolic and catabolic pathways. AcsA undergoes a two-step reaction. In the first half reaction, AcsA combines acetate with ATP to form acetyl-adenylate (AcAMP) intermediate. In the second half reaction, it can then transfer the acetyl group from AcAMP to the sulfhydryl group of CoA, forming the product AcCoA. The chain is Acetyl-coenzyme A synthetase from Mycobacterium bovis (strain ATCC BAA-935 / AF2122/97).